The following is a 489-amino-acid chain: Interferon gamma receptor 1 (489 aa).

The first 17 residues, 1 to 17, serve as a signal peptide directing secretion; the sequence is MALLFLLPLVMQGVSRA. At 18-245 the chain is on the extracellular side; it reads EMGTADLGPS…ITIFNSSIKG (228 aa). N-linked (GlcNAc...) asparagine glycans are attached at residues Asn34, Asn79, and Asn86. An intrachain disulfide couples Cys77 to Cys85. The cysteines at positions 122 and 167 are disulfide-linked. N-linked (GlcNAc...) asparagine glycosylation is present at Asn179. 2 disulfides stabilise this stretch: Cys195–Cys200 and Cys214–Cys235. N-linked (GlcNAc...) asparagine glycosylation is present at Asn240. The helical transmembrane segment at 246-266 threads the bilayer; it reads SLWIPVVAALLLFLVLSLVFI. The Cytoplasmic segment spans residues 267–489; the sequence is CFYIKKINPL…RPTEDSKEFS (223 aa). Residues 329–437 are disordered; sequence ATVPGMHTED…SEFPPNNKGE (109 aa). Residues 335–348 show a composition bias toward basic and acidic residues; that stretch reads HTEDNPGKVEHTEE. Residues 349–360 are compositionally biased toward polar residues; sequence LSSITEVVTTEE. The residue at position 369 (Ser369) is a Phosphoserine. Thr372 is modified (phosphothreonine). Ser378 is subject to Phosphoserine. The span at 379-391 shows a compositional bias: low complexity; it reads SSPLSSNQSEPGS. Residues 401-412 show a composition bias toward basic and acidic residues; that stretch reads NCSESDHSRNGF. Ser403 is subject to Phosphoserine. Over residues 415 to 429 the composition is skewed to low complexity; that stretch reads DSSCLESHSSLSDSE. Tyr457 is modified (phosphotyrosine).

This sequence belongs to the type II cytokine receptor family. In terms of assembly, monomer. Heterodimer with IFNGR2, to form the IFNG receptor complex. Interacts with JAK1. Interacts (when phosphorylated) with STAT1. Interacts with SOCS1. Phosphorylated at Ser/Thr residues. Phosphorylation of Tyr-457 is required for IFNG receptor signal transduction. Influenza virus infection leads to phosphorylation in a CSNK1A1-dependent manner. In terms of processing, ubiquitinated after phosphorylation in a CSNK1A1-dependent manner, leading to the lysosome-dependent degradation. Proteasomally degraded through 'Lys-48'-mediated ubiquitination. Ubiquitination is necessary for efficient IFNGR1 signaling.

It localises to the cell membrane. Functionally, receptor subunit for interferon gamma/INFG that plays crucial roles in antimicrobial, antiviral, and antitumor responses by activating effector immune cells and enhancing antigen presentation. Associates with transmembrane accessory factor IFNGR2 to form a functional receptor. Upon ligand binding, the intracellular domain of IFNGR1 opens out to allow association of downstream signaling components JAK1 and JAK2. In turn, activated JAK1 phosphorylates IFNGR1 to form a docking site for STAT1. Subsequent phosphorylation of STAT1 leads to dimerization, translocation to the nucleus, and stimulation of target gene transcription. STAT3 can also be activated in a similar manner although activation seems weaker. IFNGR1 intracellular domain phosphorylation also provides a docking site for SOCS1 that regulates the JAK-STAT pathway by competing with STAT1 binding to IFNGR1. This chain is Interferon gamma receptor 1, found in Homo sapiens (Human).